The chain runs to 709 residues: Polyribonucleotide nucleotidyltransferase (709 aa).

Aspartate 487 and aspartate 493 together coordinate Mg(2+). One can recognise a KH domain in the interval 554–613 (PRIHTMKISSDKIKDVIGKGGAVIRALCEETGTTIEIEDDGTIKIAATEGAAAKEAIRRI). In terms of domain architecture, S1 motif spans 623–691 (GKIYTGKVMR…RQGRIRLSIK (69 aa)).

Belongs to the polyribonucleotide nucleotidyltransferase family. As to quaternary structure, component of the RNA degradosome, which is a multiprotein complex involved in RNA processing and mRNA degradation. It depends on Mg(2+) as a cofactor.

It localises to the cytoplasm. It carries out the reaction RNA(n+1) + phosphate = RNA(n) + a ribonucleoside 5'-diphosphate. Involved in mRNA degradation. Catalyzes the phosphorolysis of single-stranded polyribonucleotides processively in the 3'- to 5'-direction. This Aliivibrio fischeri (strain MJ11) (Vibrio fischeri) protein is Polyribonucleotide nucleotidyltransferase.